Here is a 122-residue protein sequence, read N- to C-terminus: Large ribosomal subunit protein bL12 (122 aa).

Belongs to the bacterial ribosomal protein bL12 family. In terms of assembly, homodimer. Part of the ribosomal stalk of the 50S ribosomal subunit. Forms a multimeric L10(L12)X complex, where L10 forms an elongated spine to which 2 to 4 L12 dimers bind in a sequential fashion. Binds GTP-bound translation factors.

Forms part of the ribosomal stalk which helps the ribosome interact with GTP-bound translation factors. Is thus essential for accurate translation. In Levilactobacillus brevis (strain ATCC 367 / BCRC 12310 / CIP 105137 / JCM 1170 / LMG 11437 / NCIMB 947 / NCTC 947) (Lactobacillus brevis), this protein is Large ribosomal subunit protein bL12.